We begin with the raw amino-acid sequence, 186 residues long: Inner membrane-spanning protein YciB (186 aa).

6 helical membrane-spanning segments follow: residues phenylalanine 3–tyrosine 23, valine 24–histidine 44, alanine 49–histidine 69, tryptophan 76–leucine 96, leucine 121–phenylalanine 141, and phenylalanine 149–leucine 169.

The protein belongs to the YciB family.

It is found in the cell inner membrane. Its function is as follows. Plays a role in cell envelope biogenesis, maintenance of cell envelope integrity and membrane homeostasis. This Ralstonia nicotianae (strain ATCC BAA-1114 / GMI1000) (Ralstonia solanacearum) protein is Inner membrane-spanning protein YciB.